Here is a 479-residue protein sequence, read N- to C-terminus: Probable cytosol aminopeptidase (479 aa).

2 residues coordinate Mn(2+): Lys247 and Asp252. Residue Lys259 is part of the active site. Mn(2+)-binding residues include Asp270, Asp329, and Glu331. Residue Arg333 is part of the active site.

It belongs to the peptidase M17 family. The cofactor is Mn(2+).

It localises to the cytoplasm. The catalysed reaction is Release of an N-terminal amino acid, Xaa-|-Yaa-, in which Xaa is preferably Leu, but may be other amino acids including Pro although not Arg or Lys, and Yaa may be Pro. Amino acid amides and methyl esters are also readily hydrolyzed, but rates on arylamides are exceedingly low.. The enzyme catalyses Release of an N-terminal amino acid, preferentially leucine, but not glutamic or aspartic acids.. Presumably involved in the processing and regular turnover of intracellular proteins. Catalyzes the removal of unsubstituted N-terminal amino acids from various peptides. The polypeptide is Probable cytosol aminopeptidase (Vesicomyosocius okutanii subsp. Calyptogena okutanii (strain HA)).